The sequence spans 416 residues: D-amino acid dehydrogenase (416 aa).

3–17 (ITILGSGVIGVTTAY) provides a ligand contact to FAD.

The protein belongs to the DadA oxidoreductase family. The cofactor is FAD.

The enzyme catalyses a D-alpha-amino acid + A + H2O = a 2-oxocarboxylate + AH2 + NH4(+). The protein operates within amino-acid degradation; D-alanine degradation; NH(3) and pyruvate from D-alanine: step 1/1. In terms of biological role, oxidative deamination of D-amino acids. This chain is D-amino acid dehydrogenase, found in Brucella canis (strain ATCC 23365 / NCTC 10854 / RM-666).